Here is a 404-residue protein sequence, read N- to C-terminus: Protein IQ-DOMAIN 12 (404 aa).

Residues 8–25 (FGWMKRLFICEAKARAEK) are calmodulin-binding. The Nuclear localization signal 1 motif lies at 11 to 18 (MKRLFICE). IQ domains are found at residues 108–135 (NVAA…ALVR) and 136–158 (LQAI…SSHS). The Nuclear localization signal 2 motif lies at 226-233 (IKRDRMLK).

It belongs to the IQD family. As to quaternary structure, binds to multiple calmodulin (CaM) in the presence of Ca(2+) and CaM-like proteins.

It localises to the nucleus. The protein localises to the cell membrane. Its function is as follows. May be involved in cooperative interactions with calmodulins or calmodulin-like proteins. Recruits calmodulin proteins to microtubules, thus being a potential scaffold in cellular signaling and trafficking. May associate with nucleic acids and regulate gene expression at the transcriptional or post-transcriptional level. This chain is Protein IQ-DOMAIN 12, found in Arabidopsis thaliana (Mouse-ear cress).